The chain runs to 266 residues: L-cystine-binding protein TcyJ (266 aa).

Positions 1–29 are cleaved as a signal peptide; it reads MKLAHLGRQALMGVMAVALVAGMSVKSFA.

It belongs to the bacterial solute-binding protein 3 family. In terms of assembly, the complex is composed of two ATP-binding proteins (TcyN), two transmembrane proteins (TcyL) and a solute-binding protein (TcyJ).

Its subcellular location is the periplasm. Its function is as follows. Part of the ABC transporter complex TcyJLN involved in L-cystine import. Binds cystine. The chain is L-cystine-binding protein TcyJ from Escherichia coli O6:H1 (strain CFT073 / ATCC 700928 / UPEC).